We begin with the raw amino-acid sequence, 467 residues long: Protein PHOSPHATE STARVATION RESPONSE 3 (467 aa).

A disordered region spans residues 227-266; the sequence is MSLPVSSCSDQEDLQDARSPAKVQLSSSRSSSGTASCNKP. An HTH myb-type domain is found at 262 to 322; the sequence is SCNKPRLRWT…HLQKYRLAKY (61 aa). A DNA-binding region (H-T-H motif) is located at residues 293 to 318; that stretch reads PKGVLKLMKVEGLTIYHIKSHLQKYR. Over residues 327–337 the composition is skewed to basic and acidic residues; the sequence is KEDKKQEEKKT. Disordered stretches follow at residues 327–353 and 400–467; these read KEDK…KSAQ and RESI…VHDE. The span at 402-412 shows a compositional bias: polar residues; the sequence is SISSMTSTTEG. Basic and acidic residues-rich tracts occupy residues 419 to 428 and 438 to 467; these read PMEKTEDKAE and RITD…VHDE.

The protein localises to the nucleus. Functionally, transcription factor involved in phosphate starvation signaling. Binds to P1BS, an imperfect palindromic sequence 5'-GNATATNC-3', to promote the expression of inorganic phosphate (Pi) starvation-responsive genes. Functionally redundant with PHR1 and PHR2 in regulating Pi starvation response and Pi homeostasis. The chain is Protein PHOSPHATE STARVATION RESPONSE 3 from Oryza sativa subsp. indica (Rice).